Here is a 296-residue protein sequence, read N- to C-terminus: tRNA dimethylallyltransferase (296 aa).

2-9 (GPTASGKT) contributes to the ATP binding site. 4-9 (TASGKT) serves as a coordination point for substrate. 3 interaction with substrate tRNA regions span residues 27–30 (DSAL), 151–155 (QRLSR), and 232–237 (RCVGYR).

The protein belongs to the IPP transferase family. In terms of assembly, monomer. Mg(2+) serves as cofactor.

It catalyses the reaction adenosine(37) in tRNA + dimethylallyl diphosphate = N(6)-dimethylallyladenosine(37) in tRNA + diphosphate. Its function is as follows. Catalyzes the transfer of a dimethylallyl group onto the adenine at position 37 in tRNAs that read codons beginning with uridine, leading to the formation of N6-(dimethylallyl)adenosine (i(6)A). This Shewanella frigidimarina (strain NCIMB 400) protein is tRNA dimethylallyltransferase.